A 66-amino-acid polypeptide reads, in one-letter code: Surface composition regulator (66 aa).

The protein belongs to the GlgS family.

In terms of biological role, major determinant of cell surface composition. Negatively regulates motility, adhesion and synthesis of biofilm exopolysaccharides. This Shigella flexneri protein is Surface composition regulator.